Reading from the N-terminus, the 195-residue chain is Anthranilate synthase component 2 (195 aa).

Residues 3–195 (LTLIIDNYDS…KILYNFLNRV (193 aa)) form the Glutamine amidotransferase type-1 domain. 54–56 (GPG) provides a ligand contact to L-glutamine. Cysteine 84 (nucleophile; for GATase activity) is an active-site residue. L-glutamine is bound by residues glutamine 88 and 137–138 (SL). Active-site for GATase activity residues include histidine 175 and glutamate 177.

As to quaternary structure, heterotetramer consisting of two non-identical subunits: a beta subunit (TrpG) and a large alpha subunit (TrpE).

It catalyses the reaction chorismate + L-glutamine = anthranilate + pyruvate + L-glutamate + H(+). Its pathway is amino-acid biosynthesis; L-tryptophan biosynthesis; L-tryptophan from chorismate: step 1/5. Its function is as follows. Part of a heterotetrameric complex that catalyzes the two-step biosynthesis of anthranilate, an intermediate in the biosynthesis of L-tryptophan. In the first step, the glutamine-binding beta subunit (TrpG) of anthranilate synthase (AS) provides the glutamine amidotransferase activity which generates ammonia as a substrate that, along with chorismate, is used in the second step, catalyzed by the large alpha subunit of AS (TrpE) to produce anthranilate. In the absence of TrpG, TrpE can synthesize anthranilate directly from chorismate and high concentrations of ammonia. The chain is Anthranilate synthase component 2 (trpG) from Saccharolobus solfataricus (strain ATCC 35092 / DSM 1617 / JCM 11322 / P2) (Sulfolobus solfataricus).